Here is a 484-residue protein sequence, read N- to C-terminus: L-carnitine dehydrogenase/betainyl-CoA thioesterase (484 aa).

The L-carnitine dehydrogenase stretch occupies residues Met1 to Lys322. Residue Gly7–Gly12 participates in NAD(+) binding. The betainyl-CoA thioesterase stretch occupies residues Val323–Ala484.

In the N-terminal section; belongs to the 3-hydroxyacyl-CoA dehydrogenase family. L-carnitine dehydrogenase subfamily. The protein in the C-terminal section; belongs to the betainyl-CoA thioesterase family. Homodimer.

It is found in the cytoplasm. The catalysed reaction is carnitine + NAD(+) = 3-dehydrocarnitine + NADH + H(+). The enzyme catalyses N,N,N-trimethylglycyl-CoA + H2O = glycine betaine + CoA + H(+). Its pathway is amine and polyamine metabolism; carnitine metabolism. Functionally, multifunctional enzyme that catalyzes the NAD(+)-dependent oxidation of L-carnitine to 3-dehydrocarnitine and the cleavage of betainyl-CoA (N,N,N-trimethylglycyl-CoA) into glycine betaine and coenzyme A. The sequence is that of L-carnitine dehydrogenase/betainyl-CoA thioesterase from Agrobacterium fabrum (strain C58 / ATCC 33970) (Agrobacterium tumefaciens (strain C58)).